A 279-amino-acid chain; its full sequence is Gas vesicle protein L2 (279 aa).

It belongs to the gas vesicle GvpF/GvpL family. As to quaternary structure, gvpF to GvpM interact with each other in vitro, and may form multi-subunit complex(es). Interacts with GvpC, GvpN and GvpO.

Its subcellular location is the gas vesicle. In terms of biological role, proteins GvpF to GvpM might be involved in nucleating gas vesicle formation. A minor component of the gas vesicle. Gas vesicles are hollow, gas filled proteinaceous nanostructures found in several microbial planktonic microorganisms. They allow positioning of halobacteria at the optimal depth for growth in the poorly aerated, shallow brine pools of their habitat. Functionally, expression of 2 c-vac DNA fragments containing 2 divergently transcribed regions (gvpE-gvpF-gvpG-gvpH-gvpI-gvpJ-gvpK-gvpL-gvpM and gvpA-gvpC-gvpN-gvpO) allows H.volcanii to produce gas vesicles. The protein is Gas vesicle protein L2 of Halobacterium salinarum (strain ATCC 700922 / JCM 11081 / NRC-1) (Halobacterium halobium).